An 831-amino-acid chain; its full sequence is Thymine dioxygenase JBP1-B (831 aa).

The tract at residues 80–282 is thymine dioxygenase; that stretch reads VVGGVLLPGA…RLTCVCYYRA (203 aa). Fe cation contacts are provided by histidine 207, aspartate 209, and histidine 257. Arginine 273 lines the 2-oxoglutarate pocket. The segment at 409 to 578 is DNA-binding JBP1 domain; that stretch reads LGGALKAAEE…IEEARRRGNA (170 aa).

The protein belongs to the TET family. JBP1 subfamily. In terms of assembly, monomer. Binds to DNA as a monomer. Fe(2+) serves as cofactor.

It localises to the nucleus. The catalysed reaction is thymine + 2-oxoglutarate + O2 = 5-hydroxymethyluracil + succinate + CO2. Dioxygenase that catalyzes the first step of DNA base J (beta-d-glucosyl-HOMedU) biosynthesis by converting thymine to 5-hydroxymethyluracil (HOMedU). DNA base J is a hypermodified thymidine residue found in the genome of kinetoplastid parasites, which is localized primarily to repetitive DNA, namely the telomeres, and is implicated in the regulation of antigenic variation. Also specifically binds to base J-containing DNA (J-DNA). Involved in propagation and maintenance of DNA base J synthesis initiated by JBP2 by specifically binding already synthesized DNA base J and propagating J synthesis. Thymine dioxygenase activity and J-DNA-binding are independent functions. The polypeptide is Thymine dioxygenase JBP1-B (JBP1B) (Trypanosoma cruzi (strain CL Brener)).